A 489-amino-acid chain; its full sequence is Betaine aldehyde dehydrogenase (489 aa).

2 residues coordinate K(+): Thr26 and Asp93. An NAD(+)-binding site is contributed by 150–152; it reads GAW. Residue Lys162 is the Charge relay system of the active site. NAD(+) is bound at residue 176 to 179; the sequence is KPSE. Residue Val180 participates in K(+) binding. Residue 229–232 coordinates NAD(+); the sequence is GVET. Leu245 contributes to the K(+) binding site. Residue Glu251 is the Proton acceptor of the active site. Residues Gly253, Cys285, and Glu386 each coordinate NAD(+). The Nucleophile role is filled by Cys285. Cys285 carries the cysteine sulfenic acid (-SOH) modification. Lys456 and Gly459 together coordinate K(+). Glu463 acts as the Charge relay system in catalysis.

Belongs to the aldehyde dehydrogenase family. As to quaternary structure, dimer of dimers. The cofactor is K(+).

It catalyses the reaction betaine aldehyde + NAD(+) + H2O = glycine betaine + NADH + 2 H(+). It participates in amine and polyamine biosynthesis; betaine biosynthesis via choline pathway; betaine from betaine aldehyde: step 1/1. Functionally, involved in the biosynthesis of the osmoprotectant glycine betaine. Catalyzes the irreversible oxidation of betaine aldehyde to the corresponding acid. The sequence is that of Betaine aldehyde dehydrogenase from Burkholderia mallei (strain SAVP1).